A 352-amino-acid chain; its full sequence is Histidine protein kinase SaeS (352 aa).

Transmembrane regions (helical) follow at residues 9-29 (QIIIGVISSVILTTIILVIAY) and 41-61 (TLAITTMITSCLTLSICSIFI). The region spanning 130–349 (NLAHDLKTPL…TMTLTLKKFQ (220 aa)) is the Histidine kinase domain. His-133 is subject to Phosphohistidine; by autocatalysis.

In terms of processing, autophosphorylated.

The protein resides in the cell membrane. It catalyses the reaction ATP + protein L-histidine = ADP + protein N-phospho-L-histidine.. Its function is as follows. Member of the two-component regulatory system SaeR/SaeS. Probably functions as a membrane-associated protein kinase that upon sensing the appropriate signal, autophosphorylates and in turn activates the cytosolic response regulator SaeR. This Staphylococcus epidermidis (strain ATCC 35984 / DSM 28319 / BCRC 17069 / CCUG 31568 / BM 3577 / RP62A) protein is Histidine protein kinase SaeS (saeS).